Consider the following 1368-residue polypeptide: MAVAEAKPQYSHAEKKRFRKSFGKQTDIMPIPNLLEIQLKSYRDFLQTDTKLSEQLNTGLHAAFSSVFPIESFSGNARLEYVGYKLGEPAFDVRECKLRGLTYSAPLRVKIRLVVLDKDASDDPKPIKDIREQDVFMGEIPLMTDVGTFVVNGTERVVVSQLHRSPGVIFEHDKGKTHSSGKLLYSARIIPYRGSWLDFEFDPKDCVYVRIDRRRKLPVTILLRALGYEAEDILSEFFETTHCHLKNGEYHIDLIPQRLRGEIASFDIHVPETGELIVEQGRRITARHIKQMEKSQMQDLVVPRDYLIGKTLAKNIIDTSTGEFLAQANDEITEELLDAMANHGILQIDMIYTNDLDHGSYISDTLKIDPTGSQLEALVEIYRMMRPGEPPTKEAAEALFKNLFFVEERYDLSAVGRMKFNRRVGIKSDEGPGTLTKEDILSVIKTLIDIRNGIGMVDDIDHLGNRRVRSVGEMTENQFRVGLVRVERAVKERLSLVESENLMPQDLINAKPVSAAIKEFFGSSQLSQFMDQVNPLSGVTHKRRVSALGPGGLTRERAGFEVRDVHTTHYGRVCPIETPEGPNIGLINSLSVYARTNEYGFIETPCRKVVNGRVTDEVEYLSAIEEVDQYIAQSNVELDAQGNILADLVPCRHQNEFSLTTPDKINYMDVSPKQIVSVAASLIPFLEHDDANRALMGSNMQRQAVPTLRSEKPLVGTGMERIVASDSGVSVVAKRGGVIDLVDASRIVVRVNDDETTAGETGVDIYNLTKYFRSNQDTCINQRPIVSTGDRIQRGDVLADGPCTDMGELALGQNLLVAFMPWNGYNFEDSILISERIVHDDRFTTIHIEELTCIARDTKLGTEEITADIPNVGESALSNLDESGVVYIGAEVKAGDILVGKVTPKGETQLTPEEKLLRAIFGEKASDVKDSSLRVPSGMNGTVIDVQVFTRDGLEKDARAKSIEEEHLARVRKDLIDERRIREEDIYHRVSHLLLDKVATGGPGSLKPGSKITQDYLDKVEREKWFDIRIEDDAISQQLEQLSKQLELLTKEMEKRFNDSRKKIIQGDDLAPGVLKIVKVYLAVKRRIQPGDKMAGRHGNKGVISIVVPVEDMPHMEDGTAVDIVLNPLGVPSRMNIGQVLETHLGLAAKGLGRKIAQMLDEKQTPEAIKAYLEKIYNHDGVQRVNLKCLNDDELMTLADNLRAGVPMATPVFDGATEQEIKSMLQLADLPADGKTVLIDGRTGNKFDNPVTVGYMYMLKLNHLVDDKMHARSTGSYSLVTQQPLGGKAQFGGQRFGEMEVWALEAYGAAYTLQEMLTVKSDDVGGRTKIYKNIVDGDHRMDPGMPESFNVLLKEIRALGIDIELEHD.

It belongs to the RNA polymerase beta chain family. As to quaternary structure, the RNAP catalytic core consists of 2 alpha, 1 beta, 1 beta' and 1 omega subunit. When a sigma factor is associated with the core the holoenzyme is formed, which can initiate transcription.

The catalysed reaction is RNA(n) + a ribonucleoside 5'-triphosphate = RNA(n+1) + diphosphate. DNA-dependent RNA polymerase catalyzes the transcription of DNA into RNA using the four ribonucleoside triphosphates as substrates. This is DNA-directed RNA polymerase subunit beta from Legionella pneumophila subsp. pneumophila (strain Philadelphia 1 / ATCC 33152 / DSM 7513).